The sequence spans 401 residues: Inactive (1R,4R,5S)-(-)-guaia-6,10(14)-diene synthase (401 aa).

The interval 1–20 (MVKFDSGSESEMTNGDELHI) is disordered. Mg(2+) is bound by residues aspartate 134 and glutamate 139. Positions 134–138 (DDQFD) match the DDXXD motif motif. Residue arginine 242 coordinates substrate. Residue serine 292 participates in Mg(2+) binding. Lysine 295 lines the substrate pocket. Aspartate 296 is a Mg(2+) binding site. Residue 375–376 (RY) coordinates substrate.

Belongs to the terpene synthase family. It depends on Mg(2+) as a cofactor.

This Gibberella fujikuroi (strain CBS 195.34 / IMI 58289 / NRRL A-6831) (Bakanae and foot rot disease fungus) protein is Inactive (1R,4R,5S)-(-)-guaia-6,10(14)-diene synthase.